The chain runs to 331 residues: HTH-type transcriptional regulator RipA (331 aa).

Positions 112-209 constitute an HTH araC/xylS-type domain; that stretch reads RAVAQVLVSN…GATPSTFTTG (98 aa). 2 DNA-binding regions (H-T-H motif) span residues 129-150 and 176-199; these read EEFA…LKST and ISVV…RRHT.

Its function is as follows. Under iron limitation, RipA negatively controls the expression of the acn (aconitase), catA (catechol 1,2 dioxygenase), leuCD (isopropylmalate dehydratase), narKGHJI (nitrite/nitrate transporter and nitrate reductase), sdhCAB (succinate dehydrogenase), pta (phosphotransacetylase) and katA (catalase) genes. Binds to the consensus sequence in the promoter region. The sequence is that of HTH-type transcriptional regulator RipA from Corynebacterium glutamicum (strain ATCC 13032 / DSM 20300 / JCM 1318 / BCRC 11384 / CCUG 27702 / LMG 3730 / NBRC 12168 / NCIMB 10025 / NRRL B-2784 / 534).